We begin with the raw amino-acid sequence, 417 residues long: Serine hydroxymethyltransferase (417 aa).

(6S)-5,6,7,8-tetrahydrofolate contacts are provided by residues L121 and G125–L127. K229 is subject to N6-(pyridoxal phosphate)lysine. Residue S355–F357 participates in (6S)-5,6,7,8-tetrahydrofolate binding.

The protein belongs to the SHMT family. Homodimer. Pyridoxal 5'-phosphate serves as cofactor.

The protein resides in the cytoplasm. It catalyses the reaction (6R)-5,10-methylene-5,6,7,8-tetrahydrofolate + glycine + H2O = (6S)-5,6,7,8-tetrahydrofolate + L-serine. It functions in the pathway one-carbon metabolism; tetrahydrofolate interconversion. Its pathway is amino-acid biosynthesis; glycine biosynthesis; glycine from L-serine: step 1/1. Functionally, catalyzes the reversible interconversion of serine and glycine with tetrahydrofolate (THF) serving as the one-carbon carrier. This reaction serves as the major source of one-carbon groups required for the biosynthesis of purines, thymidylate, methionine, and other important biomolecules. Also exhibits THF-independent aldolase activity toward beta-hydroxyamino acids, producing glycine and aldehydes, via a retro-aldol mechanism. The protein is Serine hydroxymethyltransferase of Edwardsiella ictaluri (strain 93-146).